The chain runs to 551 residues: Cleavage and polyadenylation specificity factor subunit 6 (551 aa).

One can recognise an RRM domain in the interval 81-161 (IALYIGNLTW…QNPVVTPCNK (81 aa)). Phosphothreonine is present on Thr157. Positions 169-180 (MQSRKTTQSGQM) are enriched in polar residues. Disordered regions lie at residues 169-410 (MQSR…TPLS) and 477-551 (LHGI…YRHR). 3 stretches are compositionally biased toward pro residues: residues 237-265 (TRPP…PLAG), 285-366 (GQPP…PPPA), and 377-388 (GPPPTDPYGRPP). Composition is skewed to basic and acidic residues over residues 389-404 (PYDR…EMDA) and 489-503 (SRRE…SRSR). Phosphoserine occurs at positions 494, 500, 511, 513, and 525. The segment covering 504 to 514 (EKSRRHKSRSR) has biased composition (basic residues). Residues 515 to 551 (DRHDDYYRERSRERERHRDRDRDRDRERDREREYRHR) are compositionally biased toward basic and acidic residues.

This sequence belongs to the RRM CPSF6/7 family. Component of the cleavage factor Im (CFIm) complex.

Its subcellular location is the nucleus. The protein resides in the nucleoplasm. It localises to the nucleus speckle. The protein localises to the cytoplasm. Component of the cleavage factor Im (CFIm) complex that functions as an activator of the pre-mRNA 3'-end cleavage and polyadenylation processing required for the maturation of pre-mRNA into functional mRNAs. CFIm contributes to the recruitment of multiprotein complexes on specific sequences on the pre-mRNA 3'-end, so called cleavage and polyadenylation signals (pA signals). Most pre-mRNAs contain multiple pA signals, resulting in alternative cleavage and polyadenylation (APA) producing mRNAs with variable 3'-end formation. The CFIm complex acts as a key regulator of cleavage and polyadenylation site choice during APA through its binding to 5'-UGUA-3' elements localized in the 3'-untranslated region (UTR) for a huge number of pre-mRNAs. Plays a role in mRNA export. This chain is Cleavage and polyadenylation specificity factor subunit 6, found in Gallus gallus (Chicken).